The following is a 466-amino-acid chain: Collagenase 3 (466 aa).

Positions alanine 1–serine 13 are cleaved as a signal peptide. Residues leucine 14–valine 98 constitute a propeptide, activation peptide. Residues proline 89–valine 96 carry the Cysteine switch motif. Position 91 (cysteine 91) interacts with Zn(2+). Asparagine 112 carries N-linked (GlcNAc...) asparagine glycosylation. A Ca(2+)-binding site is contributed by aspartate 123. Asparagine 147 is a glycosylation site (N-linked (GlcNAc...) asparagine). Aspartate 157 contacts Ca(2+). Zn(2+) is bound by residues histidine 167 and aspartate 169. The tract at residues tyrosine 171–tyrosine 241 is interaction with TIMP2. The Ca(2+) site is built by aspartate 174, glycine 175, serine 177, and leucine 179. A Zn(2+)-binding site is contributed by histidine 182. The Ca(2+) site is built by asparagine 189, glycine 191, and aspartate 193. Histidine 195 contributes to the Zn(2+) binding site. Residues aspartate 197, aspartate 198, and glutamate 200 each contribute to the Ca(2+) site. Histidine 217 lines the Zn(2+) pocket. The active site involves glutamate 218. Residues histidine 221, histidine 227, and methionine 235 each coordinate Zn(2+). Residues glutamine 258–cysteine 279 are disordered. Positions proline 263–cysteine 466 are interaction with collagen. Residues proline 268 to cysteine 279 are compositionally biased toward basic and acidic residues. Hemopexin repeat units follow at residues proline 276–leucine 325, proline 326–lysine 372, valine 374–isoleucine 422, and glycine 423–cysteine 466. An intrachain disulfide couples cysteine 279 to cysteine 466. The Ca(2+) site is built by aspartate 286, isoleucine 288, aspartate 330, and alanine 332. Phosphotyrosine; by PKDCC is present on tyrosine 361. The Ca(2+) site is built by serine 378 and alanine 380. Residue asparagine 404 is glycosylated (N-linked (GlcNAc...) asparagine). Residues aspartate 427 and valine 429 each coordinate Ca(2+).

The protein belongs to the peptidase M10A family. The cofactor is Ca(2+). It depends on Zn(2+) as a cofactor. Post-translationally, the proenzyme is activated by removal of the propeptide; this cleavage can be effected by other matrix metalloproteinases, such as MMP2, MMP3 and MMP14 and may involve several cleavage steps. Cleavage can also be autocatalytic, after partial maturation by another protease or after treatment with 4-aminophenylmercuric acetate (APMA) (in vitro). N-glycosylated. In terms of processing, tyrosine phosphorylated by PKDCC/VLK.

Its subcellular location is the secreted. It localises to the extracellular space. The protein resides in the extracellular matrix. Its function is as follows. Plays a role in the degradation of extracellular matrix proteins including fibrillar collagen, fibronectin, TNC and ACAN. Cleaves triple helical collagens, including type I, type II and type III collagen, but has the highest activity with soluble type II collagen. Can also degrade collagen type IV, type XIV and type X. May also function by activating or degrading key regulatory proteins, such as TGFB1 and CCN2. Plays a role in wound healing, tissue remodeling, cartilage degradation, bone development, bone mineralization and ossification. Required for normal embryonic bone development and ossification. Plays a role in the healing of bone fractures via endochondral ossification. Plays a role in wound healing, probably by a mechanism that involves proteolytic activation of TGFB1 and degradation of CCN2. Plays a role in keratinocyte migration during wound healing. May play a role in cell migration and in tumor cell invasion. The polypeptide is Collagenase 3 (Mmp13) (Rattus norvegicus (Rat)).